Here is a 1135-residue protein sequence, read N- to C-terminus: Large proline-rich protein bag6-A (1135 aa).

One can recognise a Ubiquitin-like domain in the interval 7–82 (MEVTVKTLDS…HLVERAPPQT (76 aa)). 8 disordered regions span residues 76–114 (ERAP…RNGN), 194–238 (EQAA…SPSE), 350–407 (TGNG…PHPR), 498–522 (SFQF…VPGA), 552–612 (QGGS…QHLS), 661–698 (PVST…ESLP), 1075–1099 (KATG…EAQG), and 1116–1135 (NESY…RGDP). The span at 79–100 (PPQTQPSTGGPSTSSSTSPTSS) shows a compositional bias: low complexity. A compositionally biased stretch (polar residues) spans 212–227 (RETLPQTTQNTDGQSN). Low complexity predominate over residues 228 to 237 (TTPTSHPSPS). Residues 367–387 (QPPSTNTSEPQRPNTENQPPS) are compositionally biased toward polar residues. 2 stretches are compositionally biased toward low complexity: residues 555–600 (SSTS…SVPS) and 663–672 (STAPTQSASQ). Residues 673-692 (APPPSSPPPPPAHSSPPPAA) show a composition bias toward pro residues. Positions 1087 to 1099 (CVRRELDNSEAQG) are enriched in basic and acidic residues. Over residues 1116 to 1129 (NESYSAQRFPNTQR) the composition is skewed to polar residues.

In terms of assembly, component of the bag6/bat3 complex.

The protein localises to the cytoplasm. It localises to the cytosol. Its subcellular location is the nucleus. It is found in the secreted. The protein resides in the extracellular exosome. In terms of biological role, ATP-independent molecular chaperone preventing the aggregation of misfolded and hydrophobic patches-containing proteins. Functions as part of a cytosolic protein quality control complex, the bag6/bat3 complex, which maintains these client proteins in a soluble state and participates in their proper delivery to the endoplasmic reticulum or alternatively can promote their sorting to the proteasome where they undergo degradation. The bag6/bat3 complex is involved in the post-translational delivery of tail-anchored/type II transmembrane proteins to the endoplasmic reticulum membrane. Similarly, the bag6/bat3 complex also functions as a sorting platform for proteins of the secretory pathway that are mislocalized to the cytosol either delivering them to the proteasome for degradation or to the endoplasmic reticulum. The bag6/bat3 complex also plays a role in the endoplasmic reticulum-associated degradation (ERAD), a quality control mechanism that eliminates unwanted proteins of the endoplasmic reticulum through their retrotranslocation to the cytosol and their targeting to the proteasome. It maintains these retrotranslocated proteins in an unfolded yet soluble state condition in the cytosol to ensure their proper delivery to the proteasome. Also required for selective ubiquitin-mediated degradation of defective nascent chain polypeptides by the proteasome. Also involved in endoplasmic reticulum stress-induced pre-emptive quality control, a mechanism that selectively attenuates the translocation of newly synthesized proteins into the endoplasmic reticulum and reroutes them to the cytosol for proteasomal degradation. May ensure the proper degradation of these proteins and thereby protects the endoplasmic reticulum from protein overload upon stress. By stabilizing a large spectrum of proteins, may indirectly affect different biological processes including apoptosis. By controlling the steady-state expression of the IGF1R receptor, indirectly regulates the insulin-like growth factor receptor signaling pathway. Functionally, when nuclear, may also act as a component of some chromatin regulator complex. The chain is Large proline-rich protein bag6-A from Xenopus laevis (African clawed frog).